A 264-amino-acid chain; its full sequence is Thiazole synthase (264 aa).

The active-site Schiff-base intermediate with DXP is Lys-106. 1-deoxy-D-xylulose 5-phosphate-binding positions include Gly-167, 193 to 194, and 215 to 216; these read AG and NS.

This sequence belongs to the ThiG family. In terms of assembly, homotetramer. Forms heterodimers with either ThiH or ThiS.

The protein localises to the cytoplasm. It carries out the reaction [ThiS sulfur-carrier protein]-C-terminal-Gly-aminoethanethioate + 2-iminoacetate + 1-deoxy-D-xylulose 5-phosphate = [ThiS sulfur-carrier protein]-C-terminal Gly-Gly + 2-[(2R,5Z)-2-carboxy-4-methylthiazol-5(2H)-ylidene]ethyl phosphate + 2 H2O + H(+). It functions in the pathway cofactor biosynthesis; thiamine diphosphate biosynthesis. Catalyzes the rearrangement of 1-deoxy-D-xylulose 5-phosphate (DXP) to produce the thiazole phosphate moiety of thiamine. Sulfur is provided by the thiocarboxylate moiety of the carrier protein ThiS. In vitro, sulfur can be provided by H(2)S. The chain is Thiazole synthase from Pseudomonas fluorescens (strain SBW25).